The following is a 1232-amino-acid chain: Histone-lysine N-methyltransferase MECOM (1232 aa).

Residues 22 to 68 are disordered; the sequence is PEIPLEEMPDADADGITSVPSLHIQEPCSPATSSESFTPKEGSPYKA. Residues 25–34 show a composition bias toward acidic residues; it reads PLEEMPDADA. Residues 80–192 enclose the SET domain; that stretch reads DEFELRESTM…PGEELLLFMK (113 aa). Glycyl lysine isopeptide (Lys-Gly) (interchain with G-Cter in SUMO2) cross-links involve residues Lys101 and Lys192. The interaction with SUV39H1 and probably MAPK9 and SMAD3 stretch occupies residues 191–442; it reads MKSEEDPHEP…NHFAAGGFFG (252 aa). 5 consecutive C2H2-type zinc fingers follow at residues 211 to 238, 265 to 287, 293 to 315, 321 to 344, and 350 to 372; these read HRCE…STPH, QDCK…MLSH, YKCD…QMSH, YECE…RSQH, and HACP…KHIH. Lys294 participates in a covalent cross-link: Glycyl lysine isopeptide (Lys-Gly) (interchain with G-Cter in SUMO2). Glycyl lysine isopeptide (Lys-Gly) (interchain with G-Cter in SUMO2) cross-links involve residues Lys369 and Lys376. A C2H2-type 6 zinc finger spans residues 378–400; it reads FICEVCHKSYTQFSNLCRHKRMH. The segment at 407-429 adopts a C2H2-type 7; atypical zinc-finger fold; it reads IKCKDCGQMFSTTSSLNKHRRFC. Glycyl lysine isopeptide (Lys-Gly) (interchain with G-Cter in SUMO2) cross-links involve residues Lys432, Lys525, Lys545, Lys549, and Lys557. Residues 548 to 622 form a disordered region; the sequence is SKHPPVGDNK…KCKENGKMFK (75 aa). Basic and acidic residues predominate over residues 562–577; the sequence is LPERSSEERPLEKISD. Polar residues predominate over residues 588–600; it reads STPSGSDLETTSG. Basic and acidic residues predominate over residues 608-622; the sequence is ESDKEKCKENGKMFK. The Nuclear localization signal motif lies at 611-624; that stretch reads KEKCKENGKMFKDK. Residue Lys624 forms a Glycyl lysine isopeptide (Lys-Gly) (interchain with G-Cter in SUMO2) linkage. Ser626 carries the phosphoserine modification. Residues Lys637, Lys665, Lys687, and Lys723 each participate in a glycyl lysine isopeptide (Lys-Gly) (interchain with G-Cter in SUMO2) cross-link. Residues 720–823 form a disordered region; that stretch reads LPLKMEPQSP…DGSLQHARPT (104 aa). At Ser728 the chain carries Phosphoserine. Residues Lys733, Lys734, and Lys737 each participate in a glycyl lysine isopeptide (Lys-Gly) (interchain with G-Cter in SUMO2) cross-link. Ser742 is subject to Phosphoserine. The CTBP-binding motif 1 motif lies at 743–747; that stretch reads PFDLT. Residues Lys751, Lys754, and Lys762 each participate in a glycyl lysine isopeptide (Lys-Gly) (interchain with G-Cter in SUMO2) cross-link. Residues 758–773 show a composition bias toward polar residues; it reads SGPSKPSGTPATSQDQ. The short motif at 774–778 is the CTBP-binding motif 2 element; that stretch reads PLDLS. Residues Lys789, Lys802, and Lys803 each participate in a glycyl lysine isopeptide (Lys-Gly) (interchain with G-Cter in SUMO2) cross-link. Residues 791–805 show a composition bias toward basic and acidic residues; the sequence is TEPRKNHVFGEKKGS. The segment covering 806-816 has biased composition (polar residues); the sequence is NMDTRPSSDGS. Glycyl lysine isopeptide (Lys-Gly) (interchain with G-Cter in SUMO2) cross-links involve residues Lys837, Lys846, Lys848, and Lys879. C2H2-type zinc fingers lie at residues 914 to 936, 942 to 965, and 971 to 993; these read YTCR…LRTH, YRCK…RNIH, and FKCH…LKKH. A Glycyl lysine isopeptide (Lys-Gly) (interchain with G-Cter in SUMO2) cross-link involves residue Lys1020. Positions 1032–1043 are enriched in polar residues; that stretch reads IGNSNHGSQSPR. Residues 1032–1107 form a disordered region; that stretch reads IGNSNHGSQS…GVTRLDEEIP (76 aa). Phosphoserine occurs at positions 1039 and 1041. The span at 1044 to 1059 shows a compositional bias: basic and acidic residues; it reads NMEERMNGSHFKDKKA. Residues Lys1055 and Lys1058 each participate in a glycyl lysine isopeptide (Lys-Gly) (interchain with G-Cter in SUMO2) cross-link. Positions 1068–1088 are enriched in acidic residues; sequence LLDDEEVEDEVLLDEEDEDND. Positions 1089–1104 are enriched in basic and acidic residues; it reads IPGKPRKELGVTRLDE. Residues Lys1122, Lys1129, Lys1134, Lys1151, Lys1178, and Lys1186 each participate in a glycyl lysine isopeptide (Lys-Gly) (interchain with G-Cter in SUMO2) cross-link.

In terms of assembly, homooligomer. Interacts with CTBP1. Interacts with SMAD3 (via MH2 domain); the interaction is direct. Interacts with SMAD4; through interaction with SMAD3. Interacts with CREBBP, KAT2B and histone deacetylases. Interacts with MAPK8 and MAPK9; inhibits JNK signaling. Interacts with SUV39H1 (via SET domain); enhances MECOM transcriptional repression activity. In terms of processing, may be acetylated by CREBBP and KAT2B.

It is found in the nucleus. Its subcellular location is the nucleus speckle. The protein localises to the cytoplasm. The catalysed reaction is L-lysyl(9)-[histone H3] + S-adenosyl-L-methionine = N(6)-methyl-L-lysyl(9)-[histone H3] + S-adenosyl-L-homocysteine + H(+). Functions as a transcriptional regulator binding to DNA sequences in the promoter region of target genes and regulating positively or negatively their expression. Oncogene which plays a role in development, cell proliferation and differentiation. May also play a role in apoptosis through regulation of the JNK and TGF-beta signaling. Involved in hematopoiesis. Functionally, displays histone methyltransferase activity and monomethylates 'Lys-9' of histone H3 (H3K9me1) in vitro. Probably catalyzes the monomethylation of free histone H3 in the cytoplasm which is then transported to the nucleus and incorporated into nucleosomes where SUV39H methyltransferases use it as a substrate to catalyze histone H3 'Lys-9' trimethylation. Likely to be one of the primary histone methyltransferases along with PRDM16 that direct cytoplasmic H3K9me1 methylation. The chain is Histone-lysine N-methyltransferase MECOM from Mus musculus (Mouse).